The primary structure comprises 226 residues: Ribonuclease 3 (226 aa).

The RNase III domain occupies 7–129; sequence LPRLCRTLGY…IIGAIYLDSD (123 aa). Position 42 (Glu-42) interacts with Mg(2+). Residue Asp-46 is part of the active site. The Mg(2+) site is built by Asp-115 and Glu-118. Glu-118 is an active-site residue. One can recognise a DRBM domain in the interval 156–226; sequence DAKTLLQEYL…AAQVLELLKK (71 aa).

Belongs to the ribonuclease III family. As to quaternary structure, homodimer. Mg(2+) serves as cofactor.

The protein localises to the cytoplasm. The enzyme catalyses Endonucleolytic cleavage to 5'-phosphomonoester.. In terms of biological role, digests double-stranded RNA. Involved in the processing of primary rRNA transcript to yield the immediate precursors to the large and small rRNAs (23S and 16S). Processes some mRNAs, and tRNAs when they are encoded in the rRNA operon. Processes pre-crRNA and tracrRNA of type II CRISPR loci if present in the organism. The polypeptide is Ribonuclease 3 (Shewanella oneidensis (strain ATCC 700550 / JCM 31522 / CIP 106686 / LMG 19005 / NCIMB 14063 / MR-1)).